Consider the following 426-residue polypeptide: Putative acid phosphatase 1 (426 aa).

The signal sequence occupies residues Met1–Thr18. Residues Gln19–Trp388 lie on the Extracellular side of the membrane. His29 functions as the Nucleophile in the catalytic mechanism. Asn37 and Asn145 each carry an N-linked (GlcNAc...) asparagine glycan. Cys133 and Cys369 are oxidised to a cystine. The active-site Proton donor is the Asp276. Residues Ile389 to Ile409 form a helical membrane-spanning segment. Over Arg410–Asn426 the chain is Cytoplasmic.

The protein belongs to the histidine acid phosphatase family.

The protein localises to the membrane. It carries out the reaction a phosphate monoester + H2O = an alcohol + phosphate. The protein is Putative acid phosphatase 1 of Caenorhabditis elegans.